The chain runs to 142 residues: Endoribonuclease YbeY (142 aa).

Zn(2+) is bound by residues histidine 107, histidine 111, and aspartate 117.

It belongs to the endoribonuclease YbeY family. The cofactor is Zn(2+).

It localises to the cytoplasm. Functionally, single strand-specific metallo-endoribonuclease involved in late-stage 70S ribosome quality control and in maturation of the 3' terminus of the 16S rRNA. The protein is Endoribonuclease YbeY of Parabacteroides distasonis (strain ATCC 8503 / DSM 20701 / CIP 104284 / JCM 5825 / NCTC 11152).